A 37-amino-acid chain; its full sequence is Large ribosomal subunit protein bL36 (37 aa).

This sequence belongs to the bacterial ribosomal protein bL36 family.

The protein is Large ribosomal subunit protein bL36 of Idiomarina loihiensis (strain ATCC BAA-735 / DSM 15497 / L2-TR).